The chain runs to 329 residues: UDP-N-acetylenolpyruvoylglucosamine reductase (329 aa).

An FAD-binding PCMH-type domain is found at 28–192; sequence RVGGPADLLC…ARVEVRLHAG (165 aa). Arg172 is a catalytic residue. The disordered stretch occupies residues 202–227; it reads REDRERRRATQPLDRPTFGSTFTNPP. The active-site Proton donor is Ser221. Residue Glu291 is part of the active site. A disordered region spans residues 307-329; that stretch reads DGHAAAGGGPGAASGGVRPPEAT. Gly residues predominate over residues 311–320; the sequence is AAGGGPGAAS.

It belongs to the MurB family. FAD is required as a cofactor.

The protein resides in the cytoplasm. It catalyses the reaction UDP-N-acetyl-alpha-D-muramate + NADP(+) = UDP-N-acetyl-3-O-(1-carboxyvinyl)-alpha-D-glucosamine + NADPH + H(+). It participates in cell wall biogenesis; peptidoglycan biosynthesis. In terms of biological role, cell wall formation. The sequence is that of UDP-N-acetylenolpyruvoylglucosamine reductase from Anaeromyxobacter sp. (strain K).